We begin with the raw amino-acid sequence, 294 residues long: Deubiquitinase OTUD6B (294 aa).

N-acetylmethionine is present on Met1. Residues Leu148 to Leu285 form the OTU domain. A cys-loop region spans residues Ile153–Cys159. Residue Asp156 is part of the active site. The active-site Nucleophile is the Cys159. Residues Ile220–Leu230 form a variable-loop region. Residues Tyr268–His278 are his-loop. His278 is a catalytic residue.

In terms of assembly, interacts with the eukaryotic translation initiation factor 4F complex. In terms of tissue distribution, ubiquitously expressed. Expression is observed in several organ systems including the cardiovascular, digestive, central and peripheral nervous and musculoskeletal systems.

The catalysed reaction is Thiol-dependent hydrolysis of ester, thioester, amide, peptide and isopeptide bonds formed by the C-terminal Gly of ubiquitin (a 76-residue protein attached to proteins as an intracellular targeting signal).. Its function is as follows. Deubiquitinating enzyme that may play a role in the ubiquitin-dependent regulation of protein synthesis, downstream of mTORC1. May associate with the protein synthesis initiation complex and modify its ubiquitination to repress translation. May also repress DNA synthesis and modify different cellular targets thereby regulating cell growth and proliferation. May also play a role in proteasome assembly and function. The chain is Deubiquitinase OTUD6B from Mus musculus (Mouse).